The primary structure comprises 1412 residues: MNTKVSRQYAKISENSIQKISLALATPEDVLEWSRGEVHRPETINYKTFKPERGGLFDELIFGPLVDYKCSVCGRKYRKSNENQLCIATKECKIRGSRILSKMARRYSMGHIALNAPILHFWFFKIDHSIIAKLLGLKVFEGNSKVPTTITKAAIENLIYYKSHIVLETGGLKSLEQNKIIDISEAGLIYKNALIEIIEFYPPGSEEHNALAESISELADVTSSKIGREYGVDYYELNEIIEEFSSARIATGALAIEYLLDKIDLRAEKAAVEAELAGVQKQIYKNKKIILKNQKRDKLYKRLQVINAFINSGQDPKMMIIRNLPVIPADLRPLVQLDGSRHSTSDCNELYRRIIIRNNRLKRWKAAHAPVIIIQNEMRMLQEAVDALIDNQKKSTNQVTTKEGRPLKSISDALTGKKGRFRQNLLGKRVDYSGRSVIVVGPKLKMHQAGLPRKMAAVLFEPWIIRNLIQEKKVGSIKMARKMIEEENPIIWPHVAKVIQNKPIILNRAPTLHRLSIQAFEPVLVRAKAIQLHPLVTAGFNADFDGDQMAVHIPISPEAIRETQELMFADKNILGPKDGEPIVNPSQDMVLGLYYLSQEKAGAKGEGSFFSTYEAMLKAYEFRSVELHARVVLPFEQVKPFIAKTMRGHLISTVGKFILNNIFPANFPFIFDDNVDELELNYPSQIKKYVLPYGTNFREYIQNLKVNEPLNKKAIAKIVRQIFDTYDGLLAKEDIATVIDQLDFGNYQNCVLRYEKLRDYKKQKLPVPHLSKLSEFTIFEYSQLYKQLQQNGPVESYRVLEDHEKAELLEKIWFKYNNMVCSILDKIKDLGFHYSTLSGTSIAISDIKMAPKKHEFIKEGENYINKLNTFYAKGLITDDERYVLAIAKWTQIKNDIQEDLNQSIKDDNQNSLVMMMKSGARGNISNFVQLAGMRGLMANNVKALKVDAENERVVRSIVEVPVKSSFLEGLTSFEFYSSTHGARKGLTDTALNTAKSGYLTRRLVDVAQNIVVVAEDCFSDFGFVVKDIIDTKTNTIIVPLLERIEGRFLNKDVYDSRGIKLASAGTMVDLQTAKKIVAAGIKKVEIRSILSCHIKNSVCKKCYGKDLATNRLVSIGEAVGIIAAQSIGEPGTQLTMRTFHTGGVANVEDITGGFTRLIELIDSHEHPWGKPAKISPYYGIITKISDLAEKNAANKGFLITIEYKTSKNEKAEHIIRIEQSQKLRVKVGDKVIPGQKLVEGPIILKELLAVSDARTLQNYLLKEIQRIYRMQGISISDKYIEIIIRQMLSKVQIIENGDSNFFIGSIVDISDYQEVNGQLISQNKNPAFGNVIVKGAKQIPLLSNSFLAAASYQETSKILVHSVISSQIDKLEGLKENIIVGHKIPAGTNSNYEPKSKFDIRNPLSFFMKNNR.

Mg(2+) is bound by residues Asp-543, Asp-545, and Asp-547. Positions 1017, 1092, 1099, and 1102 each coordinate Zn(2+).

Belongs to the RNA polymerase beta' chain family. As to quaternary structure, the RNAP catalytic core consists of 2 alpha, 1 beta, 1 beta' and 1 omega subunit. When a sigma factor is associated with the core the holoenzyme is formed, which can initiate transcription. The cofactor is Mg(2+). Zn(2+) serves as cofactor.

It carries out the reaction RNA(n) + a ribonucleoside 5'-triphosphate = RNA(n+1) + diphosphate. Its function is as follows. DNA-dependent RNA polymerase catalyzes the transcription of DNA into RNA using the four ribonucleoside triphosphates as substrates. The sequence is that of DNA-directed RNA polymerase subunit beta' from Mesomycoplasma hyopneumoniae (strain J / ATCC 25934 / NCTC 10110) (Mycoplasma hyopneumoniae).